The sequence spans 111 residues: Nucleoid-associated protein SynRCC307_0025 (111 aa).

It belongs to the YbaB/EbfC family. As to quaternary structure, homodimer.

It is found in the cytoplasm. Its subcellular location is the nucleoid. In terms of biological role, binds to DNA and alters its conformation. May be involved in regulation of gene expression, nucleoid organization and DNA protection. This chain is Nucleoid-associated protein SynRCC307_0025, found in Synechococcus sp. (strain RCC307).